Consider the following 132-residue polypeptide: Small ribosomal subunit protein uS8 (132 aa).

Belongs to the universal ribosomal protein uS8 family. Part of the 30S ribosomal subunit. Contacts proteins S5 and S12.

One of the primary rRNA binding proteins, it binds directly to 16S rRNA central domain where it helps coordinate assembly of the platform of the 30S subunit. The sequence is that of Small ribosomal subunit protein uS8 from Rhodopseudomonas palustris (strain BisA53).